We begin with the raw amino-acid sequence, 452 residues long: UPF0210 protein Csac_1314 (452 aa).

The protein belongs to the UPF0210 family. In terms of assembly, homodimer.

This Caldicellulosiruptor saccharolyticus (strain ATCC 43494 / DSM 8903 / Tp8T 6331) protein is UPF0210 protein Csac_1314.